The sequence spans 101 residues: MDVRDIILRPVITEKSTNLMDDKKYTFDVLLTATKTQVRNAVEEIFDVKVKNVNIMNVRGKDKRVGRYTGKTARRRKAIVTLTNDSNDIKIFQDENKEDNK.

The protein belongs to the universal ribosomal protein uL23 family. In terms of assembly, part of the 50S ribosomal subunit. Contacts protein L29, and trigger factor when it is bound to the ribosome.

One of the early assembly proteins it binds 23S rRNA. One of the proteins that surrounds the polypeptide exit tunnel on the outside of the ribosome. Forms the main docking site for trigger factor binding to the ribosome. This chain is Large ribosomal subunit protein uL23, found in Lactobacillus helveticus (strain DPC 4571).